We begin with the raw amino-acid sequence, 489 residues long: Virion host shutoff protein (489 aa).

4 disordered regions span residues 110–135, 142–161, 285–316, and 333–363; these read EEASDVDASPPPSPITDSRPSSAFSN, SLASGTRGTAGSGAALPSAA, RSQTRRAIRREHTSSRSTETRPPLPPAAGGTE, and YEDDEDLPLDPRDVTGGHPGPRSSSSEILTP. Residues 124–134 are compositionally biased toward polar residues; that stretch reads ITDSRPSSAFS.

It belongs to the herpesviridae VHS protein family. In terms of assembly, interacts with human EIF4H, EIF4A1 and EIF4A2; interaction with eIF4AI and EIF4A2 presumably allows Vhs protein to associate with the eIF4F cap-binding complex.

The protein localises to the virion. Its function is as follows. Minor structural protein that acts as an endoribonuclease during lytic infection. Degrades host mRNAs in the cytoplasm by cutting them at preferred sites, including some in regions of translation initiation. Together with inhibition of host splicing by ICP27, contributes to an overall decrease in host protein synthesis. Also, after the onset of viral transcription, accelerates the turnover of viral mRNA, thereby facilitating the sequential expression of different classes of viral genes. Binds translation initiation factors eIF4H, eIF4AI, and eIF4AII, thereby may interact directly with the translation initiation complex and thus digest specifically mRNAs. Also impedes antigen presentation by major histocompatibility complex class I and class II molecules, inhibits secretion of cytokines that would otherwise recruit lymphocytes and neutrophils cells to the site of infection and blocks the activation of dendritic cells. Impedes the alpha/beta interferon-mediated response to infection by evading the cGAS/ STING-mediated DNA-sensing pathway and degrading CGAS via its RNase activity. The sequence is that of Virion host shutoff protein (UL41) from Human herpesvirus 1 (strain KOS) (HHV-1).